We begin with the raw amino-acid sequence, 83 residues long: UPF0512 protein I (83 aa).

Belongs to the UPF0512 family.

The protein is UPF0512 protein I of Dictyostelium discoideum (Social amoeba).